A 343-amino-acid chain; its full sequence is Probable transposase for insertion sequence element (343 aa).

The protein belongs to the transposase mutator family.

In terms of biological role, required for the transposition of the insertion element. The chain is Probable transposase for insertion sequence element from Corynebacterium diphtheriae.